The sequence spans 284 residues: L-ribulose-5-phosphate 3-epimerase UlaE (284 aa).

The protein belongs to the L-ribulose-5-phosphate 3-epimerase family.

It catalyses the reaction L-ribulose 5-phosphate = L-xylulose 5-phosphate. Its pathway is cofactor degradation; L-ascorbate degradation; D-xylulose 5-phosphate from L-ascorbate: step 3/4. Catalyzes the isomerization of L-xylulose-5-phosphate to L-ribulose-5-phosphate. Is involved in the anaerobic L-ascorbate utilization. This is L-ribulose-5-phosphate 3-epimerase UlaE from Salmonella paratyphi A (strain AKU_12601).